The sequence spans 469 residues: Alpha-2C adrenergic receptor (469 aa).

Residues 1-29 (MDLQLTTNSTDSGDRGGSSNESLQRQPPS) are disordered. At 1-36 (MDLQLTTNSTDSGDRGGSSNESLQRQPPSQYSPAEV) the chain is on the extracellular side. N-linked (GlcNAc...) asparagine glycans are attached at residues Asn-8 and Asn-20. Residues 37–62 (AGLAAVVSFLIVFTIVGNVLVVIAVL) form a helical membrane-spanning segment. The Cytoplasmic segment spans residues 63-73 (TSRALKAPQNL). Residues 74–99 (FQVSLASADILVATLVMPFSLANELM) traverse the membrane as a helical segment. Residues 100-109 (NYWYFGKVWC) lie on the Extracellular side of the membrane. A disulfide bridge connects residues Cys-109 and Cys-187. Residues 110–132 (VIYLALDVLFCTSSIVHLCAISL) traverse the membrane as a helical segment. Residues 133-154 (DRYWSVTQAVEYNLKRTPRRIK) lie on the Cytoplasmic side of the membrane. The helical transmembrane segment at 155–175 (GIIVTVWLISAVISFPPLISL) threads the bilayer. Residues 176 to 194 (YRDPEDDLYPQCELNDETW) are Extracellular-facing. A helical transmembrane segment spans residues 195 to 216 (YILSSCIGSFFAPCIIMVLVYV). Residues 217–386 (RIYRVAKLRT…RKVTQAREKR (170 aa)) are Cytoplasmic-facing. Disordered stretches follow at residues 232–261 (KRTV…AAAA) and 279–353 (HHHH…SRLS). The segment covering 279–296 (HHHHHLHHHHHHHHHQLR) has biased composition (basic residues). The segment covering 301–310 (LEDIELEESS) has biased composition (acidic residues). The segment covering 331 to 353 (RGFSFSFSSTKGGQSAGAGSRLS) has biased composition (low complexity). A helical membrane pass occupies residues 387–407 (FTFVLAVVMGVFVVCWFPFFF). Over 408–427 (TYSLYGICREACQVPETLFK) the chain is Extracellular. Residues 428–448 (FFFWIGYCNSSLNPVIYTIFN) form a helical membrane-spanning segment. Residues 449 to 469 (QDFRRSFKHILFKKKKKTSLQ) are Cytoplasmic-facing.

It belongs to the G-protein coupled receptor 1 family. Adrenergic receptor subfamily. ADRA2C sub-subfamily.

It localises to the cell membrane. Functionally, alpha-2 adrenergic receptors mediate the catecholamine-induced inhibition of adenylate cyclase through the action of G proteins. The chain is Alpha-2C adrenergic receptor (ADRA2C) from Didelphis virginiana (North American opossum).